A 90-amino-acid polypeptide reads, in one-letter code: MIKNSFSAIFFKEENEDNKGSVEFQVVSFTNRIRKLTSHLELHKKDYLSQRGLRKILGKRQRLLAYLSKKNRVRYKELIGQLEIRETKKN.

Belongs to the universal ribosomal protein uS15 family. As to quaternary structure, part of the 30S ribosomal subunit.

The protein localises to the plastid. It localises to the chloroplast. The sequence is that of Small ribosomal subunit protein uS15c (rps15) from Daucus carota (Wild carrot).